A 252-amino-acid polypeptide reads, in one-letter code: Imidazole glycerol phosphate synthase subunit HisF (252 aa).

Residues Asp11 and Asp130 contribute to the active site.

Belongs to the HisA/HisF family. Heterodimer of HisH and HisF.

It is found in the cytoplasm. The enzyme catalyses 5-[(5-phospho-1-deoxy-D-ribulos-1-ylimino)methylamino]-1-(5-phospho-beta-D-ribosyl)imidazole-4-carboxamide + L-glutamine = D-erythro-1-(imidazol-4-yl)glycerol 3-phosphate + 5-amino-1-(5-phospho-beta-D-ribosyl)imidazole-4-carboxamide + L-glutamate + H(+). It functions in the pathway amino-acid biosynthesis; L-histidine biosynthesis; L-histidine from 5-phospho-alpha-D-ribose 1-diphosphate: step 5/9. Functionally, IGPS catalyzes the conversion of PRFAR and glutamine to IGP, AICAR and glutamate. The HisF subunit catalyzes the cyclization activity that produces IGP and AICAR from PRFAR using the ammonia provided by the HisH subunit. This is Imidazole glycerol phosphate synthase subunit HisF from Bacillus cytotoxicus (strain DSM 22905 / CIP 110041 / 391-98 / NVH 391-98).